The primary structure comprises 313 residues: Dimethyladenosine transferase (313 aa).

Positions 1-22 are disordered; that stretch reads MPKIKSAASGRRRERQQQRGQL. The S-adenosyl-L-methionine site is built by His-37, Leu-39, Gly-64, Glu-85, Asp-113, and Asn-128.

The protein belongs to the class I-like SAM-binding methyltransferase superfamily. rRNA adenine N(6)-methyltransferase family. In terms of assembly, part of the small subunit (SSU) processome, composed of more than 70 proteins and the RNA chaperone small nucleolar RNA (snoRNA) U3.

Its subcellular location is the nucleus. The protein resides in the nucleoplasm. It localises to the nucleolus. The enzyme catalyses adenosine(1779)/adenosine(1780) in 18S rRNA + 4 S-adenosyl-L-methionine = N(6)-dimethyladenosine(1779)/N(6)-dimethyladenosine(1780) in 18S rRNA + 4 S-adenosyl-L-homocysteine + 4 H(+). Its function is as follows. Specifically dimethylates two adjacent adenosines in the loop of a conserved hairpin near the 3'-end of 18S rRNA in the 40S particle. Involved in the pre-rRNA processing steps leading to small-subunit rRNA production independently of its RNA-modifying catalytic activity. Part of the small subunit (SSU) processome, first precursor of the small eukaryotic ribosomal subunit. During the assembly of the SSU processome in the nucleolus, many ribosome biogenesis factors, an RNA chaperone and ribosomal proteins associate with the nascent pre-rRNA and work in concert to generate RNA folding, modifications, rearrangements and cleavage as well as targeted degradation of pre-ribosomal RNA by the RNA exosome. The chain is Dimethyladenosine transferase (DIMT1) from Bos taurus (Bovine).